A 156-amino-acid polypeptide reads, in one-letter code: 17.4 kDa class I heat shock protein (156 aa).

One can recognise a sHSP domain in the interval 42–156 (DVAAFTNAKV…PEVKSVDISG (115 aa)).

Belongs to the small heat shock protein (HSP20) family. May form oligomeric structures. Binds to AKR2A.

The protein resides in the cytoplasm. This is 17.4 kDa class I heat shock protein (HSP17.4A) from Arabidopsis thaliana (Mouse-ear cress).